Consider the following 566-residue polypeptide: MPQASEHRLGRTREPPVNVQPRVGAKIPFPPRARSKERRNPVPGPNSMLRPLPPRPGPPDERLKKLELGRGRTSGSRPRGPLRADHGVPLPGSPPPAVALPLPSRTNLARSKSVSSGDLRPMGIALGGHRGAGELGAALSRLALRPEPPTLRRSTSLRRLGGFPGPPTLLSIRTEPPTSHGSFHMISARPSEPFYSDDKMAHHTLLLGSGHVGLRNLGNTCFLNAVLQCLSSTRPLRDFCLRRDFRQEVPGGGRAQELTEAFADVIGALWHPDSCEAVNPTRFRAVFQKYVPSFSGYSQQDAQEFLKLLMERLHLEINRRGRRAPPILASGPVPSPPRRGGGALHEEPELSDDDRANLMWKRYLEREDSKIVDLFVGQLKSCLKCQACGYRSTTFEVFCDLSLPIPKKGFAGGKVSLRDCFSLFTKEEELESENAPVCDRCRQKTRSTKKLTVQRFPRILVLHLNRFSTSRGSIKKSSVGVDFPLQRLSLGDFASDKAGSPVYQLYALCNHSGSVHYGHYTALCRCQTGWHVYNDSRVSPVSENQVASSEGYVLFYQLMQEPLRCL.

Basic and acidic residues-rich tracts occupy residues 1–14 (MPQA…RTRE) and 58–70 (PPDE…ELGR). Disordered regions lie at residues 1–103 (MPQA…LPLP) and 146–169 (PEPP…PPTL). Composition is skewed to low complexity over residues 71–81 (GRTSGSRPRGP) and 151–160 (LRRSTSLRRL). Residues 134–152 (ELGAALSRLALRPEPPTLR) carry the Nuclear export signal motif. The region spanning 212–559 (VGLRNLGNTC…EGYVLFYQLM (348 aa)) is the USP domain. C221 (nucleophile) is an active-site residue. Positions 324–349 (APPILASGPVPSPPRRGGGALHEEPE) are disordered. Positions 385, 388, 438, and 441 each coordinate Zn(2+). The active-site Proton acceptor is the H519.

Belongs to the peptidase C19 family. USP21 subfamily. Interacts with BEND3.

Its subcellular location is the cytoplasm. It is found in the nucleus. The catalysed reaction is Thiol-dependent hydrolysis of ester, thioester, amide, peptide and isopeptide bonds formed by the C-terminal Gly of ubiquitin (a 76-residue protein attached to proteins as an intracellular targeting signal).. Deubiquitinates histone H2A, a specific tag for epigenetic transcriptional repression, thereby acting as a coactivator. Deubiquitination of histone H2A releaves the repression of di- and trimethylation of histone H3 at 'Lys-4', resulting in regulation of transcriptional initiation. Regulates gene expression via histone H2A deubiquitination. Deubiquitinates BAZ2A/TIP5 leading to its stabilization. Also capable of removing NEDD8 from NEDD8 conjugates but has no effect on Sentrin-1 conjugates. Also acts as a negative regulator of the ribosome quality control (RQC) by mediating deubiquitination of 40S ribosomal proteins RPS10/eS10 and RPS20/uS10, thereby antagonizing ZNF598-mediated 40S ubiquitination. The sequence is that of Ubiquitin carboxyl-terminal hydrolase 21 from Mus musculus (Mouse).